Reading from the N-terminus, the 124-residue chain is Hydrogenase maturation factor HypA (124 aa).

H2 is a Ni(2+) binding site. Residues C78, C81, C97, and C100 each coordinate Zn(2+).

It belongs to the HypA/HybF family.

Functionally, involved in the maturation of [NiFe] hydrogenases. Required for nickel insertion into the metal center of the hydrogenase. This Methanococcus vannielii (strain ATCC 35089 / DSM 1224 / JCM 13029 / OCM 148 / SB) protein is Hydrogenase maturation factor HypA.